The chain runs to 296 residues: Phosphatidylglycerol--prolipoprotein diacylglyceryl transferase (296 aa).

Transmembrane regions (helical) follow at residues 10-30 (IAFSLGPVQVHWYGLMYLAAF), 57-77 (LLFYGMLGVVLGGRIGYMLFY), 92-112 (VWEGGMSFHGGLLGVLIACWL), and 119-139 (LHFFDVMDFVAPLVPLGLGFG). Arginine 140 lines the a 1,2-diacyl-sn-glycero-3-phospho-(1'-sn-glycerol) pocket. A run of 3 helical transmembrane segments spans residues 194-214 (QLYEAALEGVVMFVVLWTFSM), 220-240 (YAVSGLFALLYGVFRFIVEFV), and 254-274 (WLTMGQILSLPLVAVGLVLLA).

Belongs to the Lgt family.

It is found in the cell inner membrane. The enzyme catalyses L-cysteinyl-[prolipoprotein] + a 1,2-diacyl-sn-glycero-3-phospho-(1'-sn-glycerol) = an S-1,2-diacyl-sn-glyceryl-L-cysteinyl-[prolipoprotein] + sn-glycerol 1-phosphate + H(+). Its pathway is protein modification; lipoprotein biosynthesis (diacylglyceryl transfer). In terms of biological role, catalyzes the transfer of the diacylglyceryl group from phosphatidylglycerol to the sulfhydryl group of the N-terminal cysteine of a prolipoprotein, the first step in the formation of mature lipoproteins. The sequence is that of Phosphatidylglycerol--prolipoprotein diacylglyceryl transferase from Xanthomonas axonopodis pv. citri (strain 306).